A 292-amino-acid polypeptide reads, in one-letter code: Elongation factor Ts (292 aa).

The tract at residues threonine 81–valine 84 is involved in Mg(2+) ion dislocation from EF-Tu.

The protein belongs to the EF-Ts family.

It is found in the cytoplasm. Functionally, associates with the EF-Tu.GDP complex and induces the exchange of GDP to GTP. It remains bound to the aminoacyl-tRNA.EF-Tu.GTP complex up to the GTP hydrolysis stage on the ribosome. The sequence is that of Elongation factor Ts from Psychromonas ingrahamii (strain DSM 17664 / CCUG 51855 / 37).